A 489-amino-acid chain; its full sequence is Tandem C2 domains nuclear protein (489 aa).

Residues Ser-82, Ser-155, Ser-167, Ser-173, and Ser-210 each carry the phosphoserine modification. The disordered stretch occupies residues 189 to 214 (DSFSSVPSSSSSRKNSQGSNRSLDTI). Low complexity predominate over residues 191–210 (FSSVPSSSSSRKNSQGSNRS). Residues Thr-213 and Thr-215 each carry the phosphothreonine modification. Ser-217 bears the Phosphoserine mark. 2 consecutive C2 domains span residues 222-341 (DLGR…SLEI) and 343-470 (APSK…NQWK). The Nuclear localization signal signature appears at 446–448 (RRK).

Its subcellular location is the nucleus. This Mus musculus (Mouse) protein is Tandem C2 domains nuclear protein (Tc2n).